A 639-amino-acid polypeptide reads, in one-letter code: MAU2 chromatid cohesion factor homolog (639 aa).

2 TPR repeats span residues 453-486 and 493-526; these read GGFYYVQGLHAFHKNSFHEAKRFLRETLKMANAE and SCSLVLLSHVFLSIGNSKESMNMVTPAMQLASKI.

Belongs to the SCC4/mau-2 family. As to quaternary structure, interacts with Nipped-B to form the cohesin loading complex.

Its subcellular location is the nucleus. The protein resides in the nucleoplasm. In terms of biological role, required for association of the cohesin complex with chromatin during interphase. Plays a role in sister chromatid cohesion and normal progression through prometaphase. The sequence is that of MAU2 chromatid cohesion factor homolog from Drosophila ananassae (Fruit fly).